Here is a 63-residue protein sequence, read N- to C-terminus: Protein D-63 (63 aa).

Homodimer.

This protein may be involved in virus assembly. This is Protein D-63 from Saccharolobus solfataricus (Sulfolobus solfataricus).